Here is a 379-residue protein sequence, read N- to C-terminus: Mating-type protein MAT-1 (379 aa).

Residues 60 to 117 (KARKALNAFVGFRCYYITIPMFKPWPMKKLSNLIGLLWEADPNKSLWSLMAKAWSTIR) constitute a DNA-binding region (alpha box).

This sequence belongs to the MATALPHA1 family.

It is found in the nucleus. Mating type proteins are sequence specific DNA-binding proteins that act as master switches in fungal differentiation by controlling gene expression in a cell type-specific fashion. Transcriptional activator that induces the transcription of alpha-specific genes. This chain is Mating-type protein MAT-1 (MAT1), found in Cochliobolus carbonum (strain 26-R-13) (Maize leaf spot fungus).